Consider the following 358-residue polypeptide: MKKILALLVIAPLLVSCSGNKNQVENEVFVKDTNGFEILMGQFAHNIENIWGLKEVLIAGPKDYVKYTDQYQTRSHINFDAGTITIETIATTNPAAHLRQAIITTLLMGDDPGSIDLYSDVNDIQISKEPFLYGQVLDNNGEPIRWEWRAAHFADYLLQNKMQTRTSGLHVISFVTIQLVPNHLDKRAHKYLPLVRKSAARYGVEESLILAIMQTESSFNPYAVSRSDALGLMQVVQHTAGKDVFKLKGKSGQPSRSYLFDPENNIDAGTAYLSILQNTYLGGIQNATSRRYAVITSYNGGAGSVLRVFHSDKNKAVGIINTMSPGDVFQTLTTKHPSGESRRYLVKVNSAQKNYRRY.

Residues 1 to 16 form the signal peptide; that stretch reads MKKILALLVIAPLLVS. Residue C17 is the site of N-palmitoyl cysteine attachment. Residue C17 is the site of S-diacylglycerol cysteine attachment.

Belongs to the transglycosylase Slt family.

It is found in the cell outer membrane. It carries out the reaction Exolytic cleavage of the (1-&gt;4)-beta-glycosidic linkage between N-acetylmuramic acid (MurNAc) and N-acetylglucosamine (GlcNAc) residues in peptidoglycan, from either the reducing or the non-reducing ends of the peptidoglycan chains, with concomitant formation of a 1,6-anhydrobond in the MurNAc residue.. Functionally, murein-degrading enzyme. May play a role in recycling of muropeptides during cell elongation and/or cell division. The protein is Membrane-bound lytic murein transglycosylase C of Yersinia pseudotuberculosis serotype O:1b (strain IP 31758).